A 155-amino-acid polypeptide reads, in one-letter code: Protein-export protein SecB (155 aa).

This sequence belongs to the SecB family. In terms of assembly, homotetramer, a dimer of dimers. One homotetramer interacts with 1 SecA dimer.

Its subcellular location is the cytoplasm. In terms of biological role, one of the proteins required for the normal export of preproteins out of the cell cytoplasm. It is a molecular chaperone that binds to a subset of precursor proteins, maintaining them in a translocation-competent state. It also specifically binds to its receptor SecA. This chain is Protein-export protein SecB, found in Enterobacter sp. (strain 638).